We begin with the raw amino-acid sequence, 93 residues long: Translation initiation factor IF-1 (93 aa).

The region spanning 1-72 (MAKEELIQFE…EKGRLIFRHK (72 aa)) is the S1-like domain. Positions 70–93 (RHKDERPGGPPRSGPPRGGQFRRR) are disordered.

Belongs to the IF-1 family. In terms of assembly, component of the 30S ribosomal translation pre-initiation complex which assembles on the 30S ribosome in the order IF-2 and IF-3, IF-1 and N-formylmethionyl-tRNA(fMet); mRNA recruitment can occur at any time during PIC assembly.

It localises to the cytoplasm. Functionally, one of the essential components for the initiation of protein synthesis. Stabilizes the binding of IF-2 and IF-3 on the 30S subunit to which N-formylmethionyl-tRNA(fMet) subsequently binds. Helps modulate mRNA selection, yielding the 30S pre-initiation complex (PIC). Upon addition of the 50S ribosomal subunit IF-1, IF-2 and IF-3 are released leaving the mature 70S translation initiation complex. The polypeptide is Translation initiation factor IF-1 (Nitrobacter winogradskyi (strain ATCC 25391 / DSM 10237 / CIP 104748 / NCIMB 11846 / Nb-255)).